Reading from the N-terminus, the 79-residue chain is Cytochrome b (79 aa).

3 helical membrane passes run 1–7 (TALLLAM), 31–52 (WLIR…YLHI), and 67–79 (WNIG…TLMA). Heme b-binding residues include H37 and H51.

The protein belongs to the cytochrome b family. The cytochrome bc1 complex contains 11 subunits: 3 respiratory subunits (MT-CYB, CYC1 and UQCRFS1), 2 core proteins (UQCRC1 and UQCRC2) and 6 low-molecular weight proteins (UQCRH/QCR6, UQCRB/QCR7, UQCRQ/QCR8, UQCR10/QCR9, UQCR11/QCR10 and a cleavage product of UQCRFS1). This cytochrome bc1 complex then forms a dimer. Heme b is required as a cofactor.

Its subcellular location is the mitochondrion inner membrane. In terms of biological role, component of the ubiquinol-cytochrome c reductase complex (complex III or cytochrome b-c1 complex) that is part of the mitochondrial respiratory chain. The b-c1 complex mediates electron transfer from ubiquinol to cytochrome c. Contributes to the generation of a proton gradient across the mitochondrial membrane that is then used for ATP synthesis. In Corcorax melanoramphos (White-winged chough), this protein is Cytochrome b (MT-CYB).